We begin with the raw amino-acid sequence, 97 residues long: UPF0416 protein RC0826 (97 aa).

Positions 1–33 are cleaved as a signal peptide; that stretch reads MRIFVKAAISTAAWRFYAHPTVAMGICVGTALA.

The protein belongs to the UPF0416 family.

The protein is UPF0416 protein RC0826 of Rickettsia conorii (strain ATCC VR-613 / Malish 7).